The sequence spans 228 residues: Phosphatidylserine decarboxylase proenzyme (228 aa).

Residue S197 is the Schiff-base intermediate with substrate; via pyruvic acid of the active site. Pyruvic acid (Ser); by autocatalysis is present on S197.

It belongs to the phosphatidylserine decarboxylase family. PSD-A subfamily. As to quaternary structure, heterodimer of a large membrane-associated beta subunit and a small pyruvoyl-containing alpha subunit. Pyruvate is required as a cofactor. Post-translationally, is synthesized initially as an inactive proenzyme. Formation of the active enzyme involves a self-maturation process in which the active site pyruvoyl group is generated from an internal serine residue via an autocatalytic post-translational modification. Two non-identical subunits are generated from the proenzyme in this reaction, and the pyruvate is formed at the N-terminus of the alpha chain, which is derived from the carboxyl end of the proenzyme. The post-translation cleavage follows an unusual pathway, termed non-hydrolytic serinolysis, in which the side chain hydroxyl group of the serine supplies its oxygen atom to form the C-terminus of the beta chain, while the remainder of the serine residue undergoes an oxidative deamination to produce ammonia and the pyruvoyl prosthetic group on the alpha chain.

The protein localises to the cell membrane. It catalyses the reaction a 1,2-diacyl-sn-glycero-3-phospho-L-serine + H(+) = a 1,2-diacyl-sn-glycero-3-phosphoethanolamine + CO2. The protein operates within phospholipid metabolism; phosphatidylethanolamine biosynthesis; phosphatidylethanolamine from CDP-diacylglycerol: step 2/2. Its function is as follows. Catalyzes the formation of phosphatidylethanolamine (PtdEtn) from phosphatidylserine (PtdSer). The protein is Phosphatidylserine decarboxylase proenzyme of Bacteroides thetaiotaomicron (strain ATCC 29148 / DSM 2079 / JCM 5827 / CCUG 10774 / NCTC 10582 / VPI-5482 / E50).